Consider the following 364-residue polypeptide: Chorismate synthase (364 aa).

NADP(+)-binding residues include arginine 48 and arginine 54. Residues 130–132 (RSS), 242–243 (NA), glycine 287, 302–306 (KPTSS), and arginine 328 contribute to the FMN site.

Belongs to the chorismate synthase family. As to quaternary structure, homotetramer. It depends on FMNH2 as a cofactor.

The catalysed reaction is 5-O-(1-carboxyvinyl)-3-phosphoshikimate = chorismate + phosphate. It participates in metabolic intermediate biosynthesis; chorismate biosynthesis; chorismate from D-erythrose 4-phosphate and phosphoenolpyruvate: step 7/7. In terms of biological role, catalyzes the anti-1,4-elimination of the C-3 phosphate and the C-6 proR hydrogen from 5-enolpyruvylshikimate-3-phosphate (EPSP) to yield chorismate, which is the branch point compound that serves as the starting substrate for the three terminal pathways of aromatic amino acid biosynthesis. This reaction introduces a second double bond into the aromatic ring system. This Allorhizobium ampelinum (strain ATCC BAA-846 / DSM 112012 / S4) (Agrobacterium vitis (strain S4)) protein is Chorismate synthase.